Consider the following 480-residue polypeptide: tRNA (uracil-5-)-methyltransferase homolog B (480 aa).

S-adenosyl-L-methionine is bound by residues Q299, E349, and N399. Catalysis depends on C427, which acts as the Nucleophile. E473 acts as the Proton acceptor in catalysis.

Belongs to the class I-like SAM-binding methyltransferase superfamily. RNA M5U methyltransferase family.

The protein localises to the mitochondrion. The enzyme catalyses uridine(54) in tRNA + S-adenosyl-L-methionine = 5-methyluridine(54) in tRNA + S-adenosyl-L-homocysteine + H(+). The catalysed reaction is a uridine in 12S rRNA + S-adenosyl-L-methionine = a 5-methyluridine in 12S rRNA + S-adenosyl-L-homocysteine + H(+). In terms of biological role, mitochondrial S-adenosyl-L-methionine-dependent methyltransferase that catalyzes the formation of 5-methyl-uridine in tRNAs and 12S rRNA. Catalyzes the methylation of uridine at position 54 (m5U54) in all tRNAs. Specifically methylates the uridine in position 429 of 12S rRNA (m5U429). Does not affect RNA stability or mitochondrial translation. This chain is tRNA (uracil-5-)-methyltransferase homolog B (trmt2b), found in Danio rerio (Zebrafish).